Reading from the N-terminus, the 506-residue chain is Maturase K (506 aa).

Belongs to the intron maturase 2 family. MatK subfamily.

The protein resides in the plastid. The protein localises to the chloroplast. Usually encoded in the trnK tRNA gene intron. Probably assists in splicing its own and other chloroplast group II introns. This is Maturase K from Crataegus monogyna (Hawthorn).